The sequence spans 200 residues: Putative biotin transporter BioYB (200 aa).

The next 6 membrane-spanning stretches (helical) occupy residues L13–F33, V36–G56, A61–F81, G90–L110, F121–Y141, and W158–I178.

The protein belongs to the BioY family.

The protein resides in the cell membrane. Putative biotin transporter. The polypeptide is Putative biotin transporter BioYB (bioYB) (Bacillus subtilis (strain 168)).